The sequence spans 662 residues: DNA ligase (662 aa).

NAD(+) is bound by residues 31 to 35, 80 to 81, and Glu-109; these read DYEYD and SL. Lys-111 functions as the N6-AMP-lysine intermediate in the catalytic mechanism. Residues Arg-132, Glu-166, Lys-282, and Lys-306 each contribute to the NAD(+) site. Positions 400, 403, 418, and 423 each coordinate Zn(2+). The region spanning 581–662 is the BRCT domain; it reads KVSNIFEGKT…FEEMLKGENI (82 aa).

This sequence belongs to the NAD-dependent DNA ligase family. LigA subfamily. The cofactor is Mg(2+). Requires Mn(2+) as cofactor.

The enzyme catalyses NAD(+) + (deoxyribonucleotide)n-3'-hydroxyl + 5'-phospho-(deoxyribonucleotide)m = (deoxyribonucleotide)n+m + AMP + beta-nicotinamide D-nucleotide.. Functionally, DNA ligase that catalyzes the formation of phosphodiester linkages between 5'-phosphoryl and 3'-hydroxyl groups in double-stranded DNA using NAD as a coenzyme and as the energy source for the reaction. It is essential for DNA replication and repair of damaged DNA. This is DNA ligase from Thermoanaerobacter sp. (strain X514).